A 115-amino-acid polypeptide reads, in one-letter code: MARALMLRKLDLAGATKAQCFTKLPWAYSTRWFSSRMGLGIRHSHTAVVLVIYVSTIIKPIHVYCTLYYAILRCCIQIYIFFFSFHVVFKRALLLRLRYAFSCTAREKKNEMFSF.

This is an uncharacterized protein from Saccharomyces cerevisiae (strain ATCC 204508 / S288c) (Baker's yeast).